A 352-amino-acid polypeptide reads, in one-letter code: Molybdenum import ATP-binding protein ModC (352 aa).

In terms of domain architecture, ABC transporter spans 2–230 (MLEINVKKRL…PLFEPWQEQG (229 aa)). 32–39 (GISGSGKS) lines the ATP pocket. One can recognise a Mop domain in the interval 290–352 (KTSIRNILSG…YAQIKAVSVM (63 aa)).

The protein belongs to the ABC transporter superfamily. Molybdate importer (TC 3.A.1.8) family. In terms of assembly, the complex is composed of two ATP-binding proteins (ModC), two transmembrane proteins (ModB) and a solute-binding protein (ModA).

It is found in the cell inner membrane. It catalyses the reaction molybdate(out) + ATP + H2O = molybdate(in) + ADP + phosphate + H(+). Part of the ABC transporter complex ModABC involved in molybdenum import. Responsible for energy coupling to the transport system. In Mannheimia succiniciproducens (strain KCTC 0769BP / MBEL55E), this protein is Molybdenum import ATP-binding protein ModC.